A 128-amino-acid polypeptide reads, in one-letter code: Probable 4-amino-4-deoxy-L-arabinose-phosphoundecaprenol flippase subunit ArnF (128 aa).

The Cytoplasmic segment spans residues 1-2; sequence MG. Residues 3-23 traverse the membrane as a helical segment; that stretch reads LIWGLFSVIIASVAQLSLGFA. At 24–35 the chain is on the periplasmic side; it reads ASHLPPMTHLWD. Residues 36 to 56 traverse the membrane as a helical segment; that stretch reads FIAALLAFGLDARILLLGLLG. Topologically, residues 57-76 are cytoplasmic; the sequence is YLLSVFCWYKTLHKLALSKA. Residues 77 to 97 form a helical membrane-spanning segment; that stretch reads YALLSMSYVLVWIASMVLPGW. Residues 98-100 lie on the Periplasmic side of the membrane; that stretch reads EGT. Residues 101-121 traverse the membrane as a helical segment; that stretch reads FSLKALLGVACIMSGLMLIFL. Residues 122–128 lie on the Cytoplasmic side of the membrane; the sequence is PMTKQRY.

It belongs to the ArnF family. In terms of assembly, heterodimer of ArnE and ArnF.

It is found in the cell inner membrane. It functions in the pathway bacterial outer membrane biogenesis; lipopolysaccharide biosynthesis. In terms of biological role, translocates 4-amino-4-deoxy-L-arabinose-phosphoundecaprenol (alpha-L-Ara4N-phosphoundecaprenol) from the cytoplasmic to the periplasmic side of the inner membrane. This chain is Probable 4-amino-4-deoxy-L-arabinose-phosphoundecaprenol flippase subunit ArnF, found in Escherichia coli O9:H4 (strain HS).